The sequence spans 164 residues: Small ribosomal subunit protein uS5 (164 aa).

The region spanning 9–72 is the S5 DRBM domain; sequence YQEKLLKISR…AAAKKNIVKI (64 aa).

It belongs to the universal ribosomal protein uS5 family. As to quaternary structure, part of the 30S ribosomal subunit. Contacts proteins S4 and S8.

In terms of biological role, with S4 and S12 plays an important role in translational accuracy. Located at the back of the 30S subunit body where it stabilizes the conformation of the head with respect to the body. The protein is Small ribosomal subunit protein uS5 of Fusobacterium nucleatum subsp. nucleatum (strain ATCC 25586 / DSM 15643 / BCRC 10681 / CIP 101130 / JCM 8532 / KCTC 2640 / LMG 13131 / VPI 4355).